Consider the following 147-residue polypeptide: D-aminoacyl-tRNA deacylase (147 aa).

Residues 136–137 carry the Gly-cisPro motif, important for rejection of L-amino acids motif; that stretch reads GP.

The protein belongs to the DTD family. In terms of assembly, homodimer.

Its subcellular location is the cytoplasm. The catalysed reaction is glycyl-tRNA(Ala) + H2O = tRNA(Ala) + glycine + H(+). It catalyses the reaction a D-aminoacyl-tRNA + H2O = a tRNA + a D-alpha-amino acid + H(+). An aminoacyl-tRNA editing enzyme that deacylates mischarged D-aminoacyl-tRNAs. Also deacylates mischarged glycyl-tRNA(Ala), protecting cells against glycine mischarging by AlaRS. Acts via tRNA-based rather than protein-based catalysis; rejects L-amino acids rather than detecting D-amino acids in the active site. By recycling D-aminoacyl-tRNA to D-amino acids and free tRNA molecules, this enzyme counteracts the toxicity associated with the formation of D-aminoacyl-tRNA entities in vivo and helps enforce protein L-homochirality. The protein is D-aminoacyl-tRNA deacylase of Streptococcus pyogenes serotype M6 (strain ATCC BAA-946 / MGAS10394).